The primary structure comprises 821 residues: Calpain-3 (821 aa).

The disordered stretch occupies residues 1–34 (MPTVISASMAPRTGASQVPRTMPQAAQGKGTEAG). One can recognise a Calpain catalytic domain in the interval 73–417 (LYLDPEFPPD…FTKLEICNLT (345 aa)). Catalysis depends on residues Cys-128, His-334, and Asn-358. Positions 418–586 (ADALESDKLQ…KRNLSEEVEN (169 aa)) are domain III. Positions 587–649 (TISVDRPVRK…EPSNTDQESE (63 aa)) are linker. The disordered stretch occupies residues 603–652 (IFVSDRANSNKELGVDQESEEGQDKTSPDKQEKSPKPEPSNTDQESEEQQ). Residues 624-638 (GQDKTSPDKQEKSPK) show a composition bias toward basic and acidic residues. Residues 641-652 (PSNTDQESEEQQ) are compositionally biased toward polar residues. EF-hand domains lie at 649 to 683 (EEQQ…VVNK), 692 to 725 (FTLE…KKIK), 722 to 757 (KKIK…AGFH), and 787 to 821 (VRLE…TMYA). The segment at 650–821 (EQQQFRNIFR…LEWLQLTMYA (172 aa)) is domain IV. Residues Ala-662, Asp-665, Glu-667, Glu-672, Asp-705, Asp-707, Ser-709, Arg-711, Glu-716, Asp-735, Asp-737, Ser-739, Thr-741, Glu-746, Asp-800, Asp-802, Asp-804, and Ile-806 each contribute to the Ca(2+) site.

Belongs to the peptidase C2 family. In terms of assembly, homodimer; via EF-hand domain 4. Interacts with TTN/titin. Interacts with CMYA5; this interaction, which results in CMYA5 proteolysis, may protect CAPN3 from autolysis. Interacts with SIMC1. Interacts with UTP25; the interaction is required for CAPN3 translocation to the nucleolus. As to expression, skeletal muscle.

The protein localises to the cytoplasm. The protein resides in the nucleus. Its subcellular location is the nucleolus. It carries out the reaction Broad endopeptidase activity.. With respect to regulation, activated by micromolar concentrations of calcium and inhibited by calpastatin. Its function is as follows. Calcium-regulated non-lysosomal thiol-protease. Proteolytically cleaves CTBP1. Mediates, with UTP25, the proteasome-independent degradation of p53/TP53. In Sus scrofa (Pig), this protein is Calpain-3 (CAPN3).